The sequence spans 153 residues: Aspartate carbamoyltransferase regulatory chain (153 aa).

4 residues coordinate Zn(2+): cysteine 109, cysteine 114, cysteine 138, and cysteine 141.

It belongs to the PyrI family. As to quaternary structure, contains catalytic and regulatory chains. It depends on Zn(2+) as a cofactor.

In terms of biological role, involved in allosteric regulation of aspartate carbamoyltransferase. The sequence is that of Aspartate carbamoyltransferase regulatory chain from Vibrio vulnificus (strain CMCP6).